The following is a 169-amino-acid chain: UPF0303 protein Oant_1766 (169 aa).

Belongs to the UPF0303 family.

The sequence is that of UPF0303 protein Oant_1766 from Brucella anthropi (strain ATCC 49188 / DSM 6882 / CCUG 24695 / JCM 21032 / LMG 3331 / NBRC 15819 / NCTC 12168 / Alc 37) (Ochrobactrum anthropi).